We begin with the raw amino-acid sequence, 529 residues long: Tyrosine--tRNA ligase, cytoplasmic (529 aa).

Residue Tyr-39 participates in L-tyrosine binding. Positions 44–52 match the 'HIGH' region motif; that stretch reads TTGKPHVAY. L-tyrosine-binding residues include Tyr-166, Gln-170, Asp-173, and Gln-188. Positions 222-226 match the 'KMSKS' region motif; sequence KMSSS. The short motif at 242–247 is the Nuclear localization signal element; the sequence is KKKLKK. Positions 335 to 362 are disordered; the sequence is KLTSSAYPEPSKNKGGVKGNPKQTTDDD. The 105-residue stretch at 365–469 folds into the tRNA-binding domain; it reads IPSRLDIRVG…EGSAAGDRVY (105 aa).

This sequence belongs to the class-I aminoacyl-tRNA synthetase family. In terms of assembly, homodimer.

It is found in the cytoplasm. Its subcellular location is the nucleus. It carries out the reaction tRNA(Tyr) + L-tyrosine + ATP = L-tyrosyl-tRNA(Tyr) + AMP + diphosphate + H(+). Functionally, catalyzes the attachment of tyrosine to tRNA(Tyr) in a two-step reaction: tyrosine is first activated by ATP to form Tyr-AMP and then transferred to the acceptor end of tRNA(Tyr). In Danio rerio (Zebrafish), this protein is Tyrosine--tRNA ligase, cytoplasmic (yars1).